The primary structure comprises 273 residues: 4-hydroxy-tetrahydrodipicolinate reductase (273 aa).

NAD(+)-binding positions include 11–16 and Glu-36; that span reads GAGGRM. Residue Arg-37 participates in NADP(+) binding. Residues 100 to 102 and 124 to 127 contribute to the NAD(+) site; these read GTT and AANY. His-157 (proton donor/acceptor) is an active-site residue. Residue His-158 coordinates (S)-2,3,4,5-tetrahydrodipicolinate. Catalysis depends on Lys-161, which acts as the Proton donor. 167–168 is a binding site for (S)-2,3,4,5-tetrahydrodipicolinate; the sequence is GT.

It belongs to the DapB family.

It localises to the cytoplasm. It carries out the reaction (S)-2,3,4,5-tetrahydrodipicolinate + NAD(+) + H2O = (2S,4S)-4-hydroxy-2,3,4,5-tetrahydrodipicolinate + NADH + H(+). The enzyme catalyses (S)-2,3,4,5-tetrahydrodipicolinate + NADP(+) + H2O = (2S,4S)-4-hydroxy-2,3,4,5-tetrahydrodipicolinate + NADPH + H(+). Its pathway is amino-acid biosynthesis; L-lysine biosynthesis via DAP pathway; (S)-tetrahydrodipicolinate from L-aspartate: step 4/4. In terms of biological role, catalyzes the conversion of 4-hydroxy-tetrahydrodipicolinate (HTPA) to tetrahydrodipicolinate. This chain is 4-hydroxy-tetrahydrodipicolinate reductase, found in Acinetobacter baylyi (strain ATCC 33305 / BD413 / ADP1).